The primary structure comprises 355 residues: Uroporphyrinogen decarboxylase (355 aa).

Residues 27 to 31 (RQAGR), Asp77, Tyr154, Thr209, and His328 contribute to the substrate site.

It belongs to the uroporphyrinogen decarboxylase family. As to quaternary structure, homodimer.

The protein resides in the cytoplasm. It carries out the reaction uroporphyrinogen III + 4 H(+) = coproporphyrinogen III + 4 CO2. It functions in the pathway porphyrin-containing compound metabolism; protoporphyrin-IX biosynthesis; coproporphyrinogen-III from 5-aminolevulinate: step 4/4. In terms of biological role, catalyzes the decarboxylation of four acetate groups of uroporphyrinogen-III to yield coproporphyrinogen-III. This is Uroporphyrinogen decarboxylase from Aliivibrio salmonicida (strain LFI1238) (Vibrio salmonicida (strain LFI1238)).